The sequence spans 252 residues: 3-deoxy-manno-octulosonate cytidylyltransferase (252 aa).

The protein belongs to the KdsB family.

It is found in the cytoplasm. The catalysed reaction is 3-deoxy-alpha-D-manno-oct-2-ulosonate + CTP = CMP-3-deoxy-beta-D-manno-octulosonate + diphosphate. The protein operates within nucleotide-sugar biosynthesis; CMP-3-deoxy-D-manno-octulosonate biosynthesis; CMP-3-deoxy-D-manno-octulosonate from 3-deoxy-D-manno-octulosonate and CTP: step 1/1. Its pathway is bacterial outer membrane biogenesis; lipopolysaccharide biosynthesis. Its function is as follows. Activates KDO (a required 8-carbon sugar) for incorporation into bacterial lipopolysaccharide in Gram-negative bacteria. This Phocaeicola vulgatus (strain ATCC 8482 / DSM 1447 / JCM 5826 / CCUG 4940 / NBRC 14291 / NCTC 11154) (Bacteroides vulgatus) protein is 3-deoxy-manno-octulosonate cytidylyltransferase.